The sequence spans 311 residues: Serine hydrolase-like protein (311 aa).

An AB hydrolase-1 domain is found at 27–227 (PPVLCLHGWL…FVSKEMFVHS (201 aa)). S102 is an active-site residue. At S210 the chain carries Phosphoserine.

This sequence belongs to the AB hydrolase superfamily. As to expression, ubiquitous. High protein expression in skeletal and cardiac muscle.

Its subcellular location is the cytoplasm. The protein localises to the perinuclear region. The protein resides in the peroxisome. Probable serine hydrolase. May be related to cell muscle hypertrophy. This Mus musculus (Mouse) protein is Serine hydrolase-like protein (Serhl).